The chain runs to 140 residues: Translation initiation factor 2 subunit beta (140 aa).

The protein belongs to the eIF-2-beta/eIF-5 family. As to quaternary structure, heterotrimer composed of an alpha, a beta and a gamma chain.

Functionally, eIF-2 functions in the early steps of protein synthesis by forming a ternary complex with GTP and initiator tRNA. The polypeptide is Translation initiation factor 2 subunit beta (eif2b) (Pyrococcus horikoshii (strain ATCC 700860 / DSM 12428 / JCM 9974 / NBRC 100139 / OT-3)).